Reading from the N-terminus, the 83-residue chain is Large ribosomal subunit protein bL31B (83 aa).

It belongs to the bacterial ribosomal protein bL31 family. Type B subfamily. As to quaternary structure, part of the 50S ribosomal subunit.

The chain is Large ribosomal subunit protein bL31B from Levilactobacillus brevis (strain ATCC 367 / BCRC 12310 / CIP 105137 / JCM 1170 / LMG 11437 / NCIMB 947 / NCTC 947) (Lactobacillus brevis).